The primary structure comprises 284 residues: MEMO1 family protein MmarC6_1286 (284 aa).

It belongs to the MEMO1 family.

This Methanococcus maripaludis (strain C6 / ATCC BAA-1332) protein is MEMO1 family protein MmarC6_1286.